The sequence spans 233 residues: Ribose-5-phosphate isomerase A (233 aa).

Substrate-binding positions include 28–31 (SGST), 83–86 (DGAD), and 96–99 (KGGG). Residue Glu-105 is the Proton acceptor of the active site. Lys-123 is a substrate binding site.

Belongs to the ribose 5-phosphate isomerase family. In terms of assembly, homodimer.

It carries out the reaction aldehydo-D-ribose 5-phosphate = D-ribulose 5-phosphate. It functions in the pathway carbohydrate degradation; pentose phosphate pathway; D-ribose 5-phosphate from D-ribulose 5-phosphate (non-oxidative stage): step 1/1. Catalyzes the reversible conversion of ribose-5-phosphate to ribulose 5-phosphate. This Bartonella bacilliformis (strain ATCC 35685 / KC583 / Herrer 020/F12,63) protein is Ribose-5-phosphate isomerase A.